A 475-amino-acid chain; its full sequence is Ribulose bisphosphate carboxylase large chain (475 aa).

Positions 1–2 are excised as a propeptide; sequence MS. Residue P3 is modified to N-acetylproline. An N6,N6,N6-trimethyllysine modification is found at K14. The substrate site is built by N123 and T173. K175 acts as the Proton acceptor in catalysis. K177 is a substrate binding site. Residues K201, D203, and E204 each contribute to the Mg(2+) site. K201 carries the N6-carboxylysine modification. The Proton acceptor role is filled by H294. Residues R295, H327, and S379 each coordinate substrate.

It belongs to the RuBisCO large chain family. Type I subfamily. In terms of assembly, heterohexadecamer of 8 large chains and 8 small chains; disulfide-linked. The disulfide link is formed within the large subunit homodimers. Mg(2+) serves as cofactor. In terms of processing, the disulfide bond which can form in the large chain dimeric partners within the hexadecamer appears to be associated with oxidative stress and protein turnover.

It is found in the plastid. It localises to the chloroplast. The enzyme catalyses 2 (2R)-3-phosphoglycerate + 2 H(+) = D-ribulose 1,5-bisphosphate + CO2 + H2O. It carries out the reaction D-ribulose 1,5-bisphosphate + O2 = 2-phosphoglycolate + (2R)-3-phosphoglycerate + 2 H(+). In terms of biological role, ruBisCO catalyzes two reactions: the carboxylation of D-ribulose 1,5-bisphosphate, the primary event in carbon dioxide fixation, as well as the oxidative fragmentation of the pentose substrate in the photorespiration process. Both reactions occur simultaneously and in competition at the same active site. This is Ribulose bisphosphate carboxylase large chain from Pinus thunbergii (Japanese black pine).